A 1062-amino-acid chain; its full sequence is Integrin alpha-8 (1062 aa).

The first 35 residues, 1 to 35 (MSAGTHCGPPGNRAPPFARLCCVSAALGMLWSPAC), serve as a signal peptide directing secretion. Residues 36–1010 (LAFNLDVDKL…ATPNVSFSIP (975 aa)) are Extracellular-facing. FG-GAP repeat units lie at residues 41 to 104 (DVDK…RSAQ), 121 to 182 (NGTK…AYAE), 187 to 239 (RNSN…IANY), 252 to 305 (KQTD…STDM), 306 to 371 (TFIQ…LLFQ), 372 to 430 (DPQV…GLHS), and 434 to 497 (QVLQ…LHPM). Asparagine 80 carries N-linked (GlcNAc...) asparagine glycosylation. Cysteines 95 and 105 form a disulfide. Asparagine 121 is a glycosylation site (N-linked (GlcNAc...) asparagine). Residues cysteine 149 and cysteine 170 are joined by a disulfide bond. A glycan (N-linked (GlcNAc...) asparagine) is linked at asparagine 176. The cysteines at positions 186 and 199 are disulfide-linked. N-linked (GlcNAc...) asparagine glycosylation occurs at asparagine 238. Positions 274, 276, 278, and 282 each coordinate Ca(2+). Residues asparagine 301 and asparagine 310 are each glycosylated (N-linked (GlcNAc...) asparagine). Positions 328, 330, 332, 336, 394, 396, 398, 400, and 402 each coordinate Ca(2+). The short motif at 454–456 (RGD) is the Cell attachment site element. Residues aspartate 458, aspartate 460, asparagine 462, tyrosine 464, and aspartate 466 each contribute to the Ca(2+) site. The N-linked (GlcNAc...) asparagine glycan is linked to asparagine 503. Disulfide bonds link cysteine 506/cysteine 517 and cysteine 523/cysteine 579. N-linked (GlcNAc...) asparagine glycans are attached at residues asparagine 600 and asparagine 604. 2 cysteine pairs are disulfide-bonded: cysteine 640/cysteine 646 and cysteine 712/cysteine 725. Residues asparagine 718, asparagine 736, asparagine 752, asparagine 779, asparagine 895, and asparagine 922 are each glycosylated (N-linked (GlcNAc...) asparagine). Cystine bridges form between cysteine 866–cysteine 923 and cysteine 928–cysteine 933. Asparagine 1004 carries N-linked (GlcNAc...) asparagine glycosylation. Residues 1011–1031 (LWVIILAILLGLLVLAILTLA) traverse the membrane as a helical segment. The Cytoplasmic segment spans residues 1032 to 1062 (LWKCGFFDRARPPQDEMTDREQLTSDKTPEA).

It belongs to the integrin alpha chain family. In terms of assembly, heterodimer of an alpha and a beta subunit. The alpha subunit is composed of a heavy and a light chain linked by a disulfide bond. Alpha-8 associates with beta-1. In brain, expressed in deep cortex, hippocampal CA1, basolateral amygdala and striatum. In kidney, expressed in glomerular mesengium (at protein level).

It is found in the membrane. The protein resides in the cell membrane. Its function is as follows. Integrin alpha-8/beta-1 functions in the genesis of kidney and probably of other organs by regulating the recruitment of mesenchymal cells into epithelial structures. It recognizes the sequence R-G-D in a wide array of ligands including TNC, FN1, SPP1 TGFB1, TGFB3 and VTN. NPNT is probably its functional ligand in kidney genesis. Neuronal receptor for TNC it mediates cell-cell interactions and regulates neurite outgrowth of sensory and motor neurons. The polypeptide is Integrin alpha-8 (Itga8) (Mus musculus (Mouse)).